A 220-amino-acid chain; its full sequence is Ribonuclease HII (220 aa).

Positions 27–220 constitute an RNase H type-2 domain; that stretch reads CIIVGVDEVG…SKISYMFKNS (194 aa). A divalent metal cation is bound by residues Asp-33, Glu-34, and Asp-128.

The protein belongs to the RNase HII family. Mn(2+) is required as a cofactor. Mg(2+) serves as cofactor.

It localises to the cytoplasm. It carries out the reaction Endonucleolytic cleavage to 5'-phosphomonoester.. In terms of biological role, endonuclease that specifically degrades the RNA of RNA-DNA hybrids. The polypeptide is Ribonuclease HII (Ehrlichia ruminantium (strain Gardel)).